A 348-amino-acid polypeptide reads, in one-letter code: D-alanine--D-alanine ligase (348 aa).

One can recognise an ATP-grasp domain in the interval 132–334 (KRVLESAGIP…YAELIEELVR (203 aa)). 162-217 (EAVLSYPVFVKPANMGSSVGISKAESEEELRAAILLALTYDSRILIEQGVLAREIE) contacts ATP. Positions 288, 301, and 303 each coordinate Mg(2+).

This sequence belongs to the D-alanine--D-alanine ligase family. Mg(2+) is required as a cofactor. The cofactor is Mn(2+).

Its subcellular location is the cytoplasm. The catalysed reaction is 2 D-alanine + ATP = D-alanyl-D-alanine + ADP + phosphate + H(+). Its pathway is cell wall biogenesis; peptidoglycan biosynthesis. In terms of biological role, cell wall formation. The polypeptide is D-alanine--D-alanine ligase (Streptococcus equi subsp. equi (strain 4047)).